Reading from the N-terminus, the 1493-residue chain is Son of sevenless homolog (1493 aa).

The DH domain occupies 244–448; sequence TYESVAVDFL…ERVVGCVSDM (205 aa). In terms of domain architecture, PH spans 496 to 606; the sequence is ELEKDGDLGM…WMAVLVKVTT (111 aa). The region spanning 656–824 is the N-terminal Ras-GEF domain; sequence GIPVIKCGTV…TILALIEKRV (169 aa). The region spanning 897–1164 is the Ras-GEF domain; that stretch reads HPIEIGRQLT…YNKSLEIQPK (268 aa). Disordered stretches follow at residues 1067–1091, 1165–1248, and 1263–1493; these read KSPP…DPEN, GLDT…DDAP, and HPKI…SSNK. A compositionally biased stretch (basic and acidic residues) spans 1079–1088; sequence QQKDDLKASD. 2 stretches are compositionally biased toward polar residues: residues 1208–1231 and 1279–1289; these read HSQN…NTPL and SRANQSNSVSL. Positions 1308–1326 are enriched in low complexity; it reads STATSPTTLTTTTTPSSAG. Residues 1350–1361 show a composition bias toward polar residues; sequence LTPSRDNSSPSA. Positions 1381-1400 are enriched in low complexity; it reads STSSDVSSSPSTSGSTSSAT. The span at 1402 to 1417 shows a compositional bias: basic and acidic residues; it reads ENQEQLRVIFDREESH. A compositionally biased stretch (pro residues) spans 1426 to 1435; the sequence is PLPPALPPPR. Positions 1453 to 1464 are enriched in polar residues; sequence HNSNSPTLSSEQ.

In terms of assembly, interacts with cmd-1 in the presence of Ca(2+).

Functionally, promotes the exchange of Ras-bound GDP by GTP. May regulate signaling pathways downstream of receptor tyrosine kinase, egl-15 and let-23. Required for larval and male spicule development, fluid homeostasis, vulva induction, spermatogenesis, and oogenesis by promoting meiosis prophase exit during oocyte maturation. Required for the delamination of G1 cell by promoting the loss of cell junctions and detachment from the excretory system during larval development. Plays a role in nicotinic acetylcholine receptor (nAChR)-mediated sensitivity to nicotine. Regulates synaptic levels of nAchR subunit lev-1 in the nerve cord. This is Son of sevenless homolog from Caenorhabditis elegans.